Reading from the N-terminus, the 430-residue chain is Histidinol dehydrogenase (430 aa).

The NAD(+) site is built by Y130, Q191, and N214. Substrate contacts are provided by S237, Q259, and H262. Q259 and H262 together coordinate Zn(2+). Catalysis depends on proton acceptor residues E327 and H328. Substrate is bound by residues H328, D361, E415, and H420. Zn(2+) is bound at residue D361. Position 420 (H420) interacts with Zn(2+).

This sequence belongs to the histidinol dehydrogenase family. Requires Zn(2+) as cofactor.

It catalyses the reaction L-histidinol + 2 NAD(+) + H2O = L-histidine + 2 NADH + 3 H(+). Its pathway is amino-acid biosynthesis; L-histidine biosynthesis; L-histidine from 5-phospho-alpha-D-ribose 1-diphosphate: step 9/9. Functionally, catalyzes the sequential NAD-dependent oxidations of L-histidinol to L-histidinaldehyde and then to L-histidine. The sequence is that of Histidinol dehydrogenase from Brucella abortus (strain 2308).